Consider the following 303-residue polypeptide: Heme A synthase (303 aa).

Residues 1-8 (MFGKKNLK) lie on the Cytoplasmic side of the membrane. The helical transmembrane segment at 9–29 (WLGVVATLMMTFVQLGGALVT) threads the bilayer. At 30-67 (KTGSADGCGSSWPLCHGALIPEFFPIDTIIELSHRAVS) the chain is on the extracellular side. Cys37 and Cys44 form a disulfide bridge. The active site involves Glu60. Heme o is bound at residue His63. A helical transmembrane segment spans residues 68-88 (ALSLLMVLWLVITAWKHIGYI). Residues 89–93 (KEIKP) are Cytoplasmic-facing. A helical transmembrane segment spans residues 94–114 (LSIISVGFLLLQALIGAAAVI). Residues 115 to 125 (WQQNDYVLALH) are Extracellular-facing. Heme o is bound at residue His125. Residues 126-146 (FGISLISFSSVFLITLIIFSI) traverse the membrane as a helical segment. The Cytoplasmic portion of the chain corresponds to 147–163 (DQKYEAAELYIKKPLRR). A helical membrane pass occupies residues 164–184 (LTWLMAIIIYCGVYTGALVRH). At 185–215 (ADASLAYGGWPLPFHDLVPHSEQDWVQLTHR) the chain is on the extracellular side. His214 is a heme b binding site. The helical transmembrane segment at 216–236 (IMAFIVFTIIMITYIHAVKNY) threads the bilayer. Residues 237–244 (PNNRTVHY) are Cytoplasmic-facing. The helical transmembrane segment at 245 to 265 (GYTAAFILVILQVITGALSIM) threads the bilayer. The Extracellular portion of the chain corresponds to 266 to 270 (TNVNL). A helical membrane pass occupies residues 271 to 291 (IIALFHALFITYLFGMTTYFI). Heme b is bound at residue His276. Topologically, residues 292–303 (MLMLRSVRSDKQ) are cytoplasmic.

Belongs to the COX15/CtaA family. Type 1 subfamily. As to quaternary structure, interacts with CtaB. Heme b serves as cofactor.

It localises to the cell membrane. It catalyses the reaction Fe(II)-heme o + 2 A + H2O = Fe(II)-heme a + 2 AH2. Its pathway is porphyrin-containing compound metabolism; heme A biosynthesis; heme A from heme O: step 1/1. Functionally, catalyzes the conversion of heme O to heme A by two successive hydroxylations of the methyl group at C8. The first hydroxylation forms heme I, the second hydroxylation results in an unstable dihydroxymethyl group, which spontaneously dehydrates, resulting in the formyl group of heme A. This chain is Heme A synthase, found in Staphylococcus aureus (strain bovine RF122 / ET3-1).